The chain runs to 2140 residues: Dedicator of cytokinesis protein 7 (2140 aa).

Ser-30, Ser-180, and Ser-182 each carry phosphoserine. Residues 138–183 (FNPNTLDKQKERQKGLPKQVFESDEAPDGNSYQDDQDDLKRRSMSI) are disordered. Residues 365 to 395 (FKEADATKNKEKLEKLKSQADQFCQRLGKYR) adopt a coiled-coil conformation. Lys-381 bears the N6-methyllysine mark. Residue Thr-450 is modified to Phosphothreonine. The residue at position 452 (Ser-452) is a Phosphoserine. In terms of domain architecture, C2 DOCK-type spans 561-727 (RNLLYIYPQS…GVFNVEVVAV (167 aa)). Phosphoserine occurs at positions 862, 864, 882, 888, 896, 900, and 905. The segment covering 888–901 (SLNLNRSRSLSNSN) has biased composition (low complexity). A disordered region spans residues 888 to 971 (SLNLNRSRSL…MSSHTETSSF (84 aa)). Phosphothreonine occurs at positions 907 and 909. Phosphoserine is present on residues Ser-910, Ser-929, Ser-964, Ser-1383, Lys-1390, Ala-1394, Glu-1398, Tyr-1421, Ser-1425, Arg-1429, Ser-1430, Ser-1432, Ser-1434, and Ser-1438. A compositionally biased stretch (polar residues) spans 943-971 (SNPSPSAESTQAMDRSCNRMSSHTETSSF). A DOCKER domain is found at 1678–2114 (KGYQTSPDLR…LQPLINRKIP (437 aa)). An N6-acetyllysine modification is found at Lys-1962. Residues 2086–2112 (DQKEYQRELERNYHRLKEALQPLINRK) adopt a coiled-coil conformation. Ser-2129 is subject to Phosphoserine.

This sequence belongs to the DOCK family. Component of the DOCK7-induced septin displacement/DISP complex, at least composed of DOCK7, LRCH3 and MYO6. Interacts with TSC1. Interacts with nucleotide-free RAC1 and RAC3. Interacts with TACC3 and CRY1. Interacts with NOD2. Widely expressed.

Its subcellular location is the cell projection. It is found in the axon. Functionally, functions as a guanine nucleotide exchange factor (GEF), which activates Rac1 and Rac3 Rho small GTPases by exchanging bound GDP for free GTP. Does not have a GEF activity for CDC42. Required for STMN1 'Ser-15' phosphorylation during axon formation and consequently for neuronal polarization. As part of the DISP complex, may regulate the association of septins with actin and thereby regulate the actin cytoskeleton. Has a role in pigmentation. Involved in the regulation of cortical neurogenesis through the control of radial glial cells (RGCs) proliferation versus differentiation; negatively regulates the basal-to-apical interkinetic nuclear migration of RGCs by antagonizing the microtubule growth-promoting function of TACC3. The chain is Dedicator of cytokinesis protein 7 (DOCK7) from Homo sapiens (Human).